The sequence spans 155 residues: uncharacterized protein (155 aa).

This is an uncharacterized protein from Methanocaldococcus jannaschii (strain ATCC 43067 / DSM 2661 / JAL-1 / JCM 10045 / NBRC 100440) (Methanococcus jannaschii).